We begin with the raw amino-acid sequence, 80 residues long: UPF0270 protein ASA_3305 (80 aa).

This sequence belongs to the UPF0270 family.

In Aeromonas salmonicida (strain A449), this protein is UPF0270 protein ASA_3305.